The primary structure comprises 524 residues: Solute carrier family 40 member 1 (524 aa).

The segment covering 1–18 (MENETELRVVHQEEQQRE) has biased composition (basic and acidic residues). The disordered stretch occupies residues 1–30 (MENETELRVVHQEEQQREEGEDESQPQNPP). Helical transmembrane passes span 70 to 92 (SLLL…GPIV), 109 to 129 (LLFQ…LLLV), 137 to 157 (LPVF…GVLS), 191 to 211 (GIDL…ISFV), 218 to 238 (ITFA…FISV), 314 to 334 (VVLP…FGTL), 347 to 367 (YIIG…TLVY), 380 to 400 (GLWS…SIWV), 409 to 429 (MLMA…LAVI), 446 to 466 (GVQN…GIIV), and 472 to 492 (FWIL…LYTI).

This sequence belongs to the ferroportin (FP) (TC 2.A.100) family. SLC40A subfamily.

It localises to the membrane. In terms of biological role, may be involved in iron transport and iron homeostasis. The protein is Solute carrier family 40 member 1 (IREG1) of Arabidopsis thaliana (Mouse-ear cress).